We begin with the raw amino-acid sequence, 130 residues long: Con-Ins G2b (130 aa).

Positions 1 to 23 (MTTSSYFLLVALGLLLYVRQSFS) are cleaved as a signal peptide. Disulfide bonds link Cys-29–Cys-100, Cys-41–Cys-103, Cys-53–Cys-116, and Cys-102–Cys-107. 4-hydroxyproline; partial is present on Pro-34. A disordered region spans residues 54 to 77 (EEEEARRGGTNDGGKKRRRASPLR). Positions 59–92 (RRGGTNDGGKKRRRASPLRKRRRFISMLKARAKR) are cleaved as a propeptide — c peptide. The span at 68–77 (KKRRRASPLR) shows a compositional bias: basic residues. Position 111 is a 4-carboxyglutamate; partial (Glu-111).

The protein belongs to the insulin family. In terms of assembly, heterodimer of A and B chains; disulfide-linked. In terms of tissue distribution, expressed by the venom gland.

It is found in the secreted. Its function is as follows. This venom insulin, from a fish-hunting cone snail, facilitates prey capture by rapidly inducing hypoglycemic shock. Intraperitoneal injection of this peptide into zebrafish lowers blood glucose with the same potency than human insulin. In vivo, when applied to water, this peptide reduces overall locomotor activity of zebrafish larvae, observed as a significant decrease in the percentage of time spent swimming and movement frequency. The chain is Con-Ins G2b from Conus geographus (Geography cone).